Here is a 622-residue protein sequence, read N- to C-terminus: DNA mismatch repair protein MutL (622 aa).

Residues 376 to 401 are disordered; it reads REVREGSSTGRAGNYQPPEPPSREAM.

It belongs to the DNA mismatch repair MutL/HexB family.

Its function is as follows. This protein is involved in the repair of mismatches in DNA. It is required for dam-dependent methyl-directed DNA mismatch repair. May act as a 'molecular matchmaker', a protein that promotes the formation of a stable complex between two or more DNA-binding proteins in an ATP-dependent manner without itself being part of a final effector complex. The sequence is that of DNA mismatch repair protein MutL from Aeromonas hydrophila subsp. hydrophila (strain ATCC 7966 / DSM 30187 / BCRC 13018 / CCUG 14551 / JCM 1027 / KCTC 2358 / NCIMB 9240 / NCTC 8049).